The primary structure comprises 437 residues: Enolase 1 (437 aa).

Gln-164 is a (2R)-2-phosphoglycerate binding site. The active-site Proton donor is Glu-206. Mg(2+)-binding residues include Asp-244, Glu-289, and Asp-316. (2R)-2-phosphoglycerate-binding residues include Lys-341, Arg-370, Ser-371, and Lys-392. Lys-341 functions as the Proton acceptor in the catalytic mechanism.

It belongs to the enolase family. Requires Mg(2+) as cofactor.

Its subcellular location is the cytoplasm. The protein localises to the secreted. The protein resides in the cell surface. The enzyme catalyses (2R)-2-phosphoglycerate = phosphoenolpyruvate + H2O. Its pathway is carbohydrate degradation; glycolysis; pyruvate from D-glyceraldehyde 3-phosphate: step 4/5. Its function is as follows. Catalyzes the reversible conversion of 2-phosphoglycerate (2-PG) into phosphoenolpyruvate (PEP). It is essential for the degradation of carbohydrates via glycolysis. The polypeptide is Enolase 1 (Desulfitobacterium hafniense (strain Y51)).